A 263-amino-acid chain; its full sequence is Proenkephalin-A (263 aa).

Residues 1–24 form the signal peptide; it reads MARFLGLCTWLLALGPGLLATVRA. Intrachain disulfides connect Cys26/Cys48, Cys30/Cys52, and Cys33/Cys65. 2 propeptides span residues 192–203 and 213–223; these read SPHLEDETKELQ and VGRPEWWMDYQ. Ser247 is subject to Phosphoserine.

This sequence belongs to the opioid neuropeptide precursor family. Proenkephalin-A is cleaved by CTSL to generate Met-enkephalin. Post-translationally, processed and degraded by ACE. In terms of processing, probably cleaved by ACE. Processed by ACE to generate Met-enkephalin in the nucleus accumbens of the brain. Post-translationally, the N-terminal domain contains 6 conserved cysteines thought to be involved in disulfide bonding and/or processing. Secreted by neuroendocrine chromaffin cells through cromaffin granules.

Its subcellular location is the cytoplasmic vesicle. It localises to the secretory vesicle. It is found in the chromaffin granule lumen. The protein localises to the secreted. Neuropeptide that competes with and mimic the effects of opiate drugs. They play a role in a number of physiologic functions, including pain perception and responses to stress. Its function is as follows. Met-enkephalin-Arg-Phe neuropeptide acts as a strong ligand of Mu-type opioid receptor OPRM1. Met-enkephalin-Arg-Phe-binding to OPRM1 in the nucleus accumbens of the brain increases activation of OPRM1, leading to long-term synaptic depression of glutamate release. In terms of biological role, increases glutamate release in the striatum and decreases GABA concentration in the striatum. Functionally, increases glutamate release in the striatum. Enkelytin possesses antibacterial activity against Gram-positive bacteria such as Micrococcus luteus and Bacillus megaterium. This is Proenkephalin-A (PENK) from Bos taurus (Bovine).